The primary structure comprises 576 residues: N-acetylmuramoyl-L-alanine amidase (576 aa).

Residues 1–21 (MAQGVLWILLGLLLWSDPGTA) form the signal peptide. Asn-77 carries an N-linked (GlcNAc...) asparagine glycan. Ser-239 is modified (phosphoserine). A deamidated asparagine mark is found at Asn-274 and Asn-322. Asn-367 carries N-linked (GlcNAc...) asparagine glycosylation. An N-acetylmuramoyl-L-alanine amidase domain is found at 406-532 (FLYVHHTYVP…RQLVRTDCPG (127 aa)). His-410 contacts Zn(2+). The cysteines at positions 419 and 425 are disulfide-linked. N-linked (GlcNAc...) asparagine glycosylation is present at Asn-485. Zn(2+) is bound by residues His-522 and Cys-530. Residues 550–576 (KPRPARSVSKRSRREPPPRTLPATDLQ) form a disordered region.

This sequence belongs to the N-acetylmuramoyl-L-alanine amidase 2 family. It depends on Zn(2+) as a cofactor. In terms of tissue distribution, strongly expressed in liver and fetal liver, and secreted into serum. Expressed to a much lesser extent in transverse colon, lymph nodes, heart, thymus, pancreas, descending colon, stomach and testis. Isoform 2 is not detected in the liver or serum.

Its subcellular location is the secreted. The protein localises to the membrane. The catalysed reaction is Hydrolyzes the link between N-acetylmuramoyl residues and L-amino acid residues in certain cell-wall glycopeptides.. Functionally, may play a scavenger role by digesting biologically active peptidoglycan (PGN) into biologically inactive fragments. Has no direct bacteriolytic activity. This chain is N-acetylmuramoyl-L-alanine amidase (PGLYRP2), found in Homo sapiens (Human).